Reading from the N-terminus, the 162-residue chain is Peptidyl-prolyl cis-trans isomerase-like 1 (162 aa).

The 155-residue stretch at 1–155 (MATDVTFDTS…DEVKILRAKV (155 aa)) folds into the PPIase cyclophilin-type domain.

Belongs to the cyclophilin-type PPIase family. PPIL1 subfamily.

The catalysed reaction is [protein]-peptidylproline (omega=180) = [protein]-peptidylproline (omega=0). Its function is as follows. PPIases accelerate the folding of proteins. It catalyzes the cis-trans isomerization of proline imidic peptide bonds in oligopeptides. The sequence is that of Peptidyl-prolyl cis-trans isomerase-like 1 (cyp1) from Emericella nidulans (strain FGSC A4 / ATCC 38163 / CBS 112.46 / NRRL 194 / M139) (Aspergillus nidulans).